We begin with the raw amino-acid sequence, 458 residues long: Bifunctional protein GlmU (458 aa).

Residues Met-1–Arg-229 form a pyrophosphorylase region. UDP-N-acetyl-alpha-D-glucosamine is bound by residues Leu-8–Gly-11, Lys-22, Gln-72, and Gly-77–Thr-78. Asp-102 serves as a coordination point for Mg(2+). UDP-N-acetyl-alpha-D-glucosamine contacts are provided by Gly-139, Glu-154, Asn-169, and Asn-227. A Mg(2+)-binding site is contributed by Asn-227. A linker region spans residues Val-230–Asn-250. The tract at residues Gly-251–Gln-458 is N-acetyltransferase. UDP-N-acetyl-alpha-D-glucosamine-binding residues include Arg-332 and Lys-350. His-362 serves as the catalytic Proton acceptor. The UDP-N-acetyl-alpha-D-glucosamine site is built by Tyr-365 and Asn-376. The acetyl-CoA site is built by Ala-379, Ser-404, Ala-422, and Arg-439.

It in the N-terminal section; belongs to the N-acetylglucosamine-1-phosphate uridyltransferase family. The protein in the C-terminal section; belongs to the transferase hexapeptide repeat family. In terms of assembly, homotrimer. Mg(2+) is required as a cofactor.

It is found in the cytoplasm. The enzyme catalyses alpha-D-glucosamine 1-phosphate + acetyl-CoA = N-acetyl-alpha-D-glucosamine 1-phosphate + CoA + H(+). It catalyses the reaction N-acetyl-alpha-D-glucosamine 1-phosphate + UTP + H(+) = UDP-N-acetyl-alpha-D-glucosamine + diphosphate. It participates in nucleotide-sugar biosynthesis; UDP-N-acetyl-alpha-D-glucosamine biosynthesis; N-acetyl-alpha-D-glucosamine 1-phosphate from alpha-D-glucosamine 6-phosphate (route II): step 2/2. It functions in the pathway nucleotide-sugar biosynthesis; UDP-N-acetyl-alpha-D-glucosamine biosynthesis; UDP-N-acetyl-alpha-D-glucosamine from N-acetyl-alpha-D-glucosamine 1-phosphate: step 1/1. Its pathway is bacterial outer membrane biogenesis; LPS lipid A biosynthesis. Functionally, catalyzes the last two sequential reactions in the de novo biosynthetic pathway for UDP-N-acetylglucosamine (UDP-GlcNAc). The C-terminal domain catalyzes the transfer of acetyl group from acetyl coenzyme A to glucosamine-1-phosphate (GlcN-1-P) to produce N-acetylglucosamine-1-phosphate (GlcNAc-1-P), which is converted into UDP-GlcNAc by the transfer of uridine 5-monophosphate (from uridine 5-triphosphate), a reaction catalyzed by the N-terminal domain. This chain is Bifunctional protein GlmU, found in Lactococcus lactis subsp. cremoris (strain MG1363).